Reading from the N-terminus, the 901-residue chain is Protein translocase subunit SecA 1 (901 aa).

Residues Q87, 105 to 109 (GEGKT), and D500 contribute to the ATP site. A disordered region spans residues 847 to 901 (LNHPESGSWGGEGEGPSSEGAPHLPFKRDGEKVGRNQACPCGSGKKYKQCCGKLS). Positions 885, 887, 896, and 897 each coordinate Zn(2+).

Belongs to the SecA family. Monomer and homodimer. Part of the essential Sec protein translocation apparatus which comprises SecA, SecYEG and auxiliary proteins SecDF-YajC and YidC. Zn(2+) serves as cofactor.

The protein localises to the cell inner membrane. Its subcellular location is the cytoplasm. It catalyses the reaction ATP + H2O + cellular proteinSide 1 = ADP + phosphate + cellular proteinSide 2.. Part of the Sec protein translocase complex. Interacts with the SecYEG preprotein conducting channel. Has a central role in coupling the hydrolysis of ATP to the transfer of proteins into and across the cell membrane, serving both as a receptor for the preprotein-SecB complex and as an ATP-driven molecular motor driving the stepwise translocation of polypeptide chains across the membrane. In Magnetococcus marinus (strain ATCC BAA-1437 / JCM 17883 / MC-1), this protein is Protein translocase subunit SecA 1.